Consider the following 418-residue polypeptide: Tyrosine--tRNA ligase (418 aa).

An L-tyrosine-binding site is contributed by Y38. The 'HIGH' region signature appears at 43 to 52 (CTARSLHIGS). L-tyrosine contacts are provided by Y175 and Q179. The 'KMSKS' region motif lies at 235-239 (KMGKT). K238 serves as a coordination point for ATP. An S4 RNA-binding domain is found at 348 to 413 (LSVVKLLQVS…CGKKRHLKVV (66 aa)).

It belongs to the class-I aminoacyl-tRNA synthetase family. TyrS type 1 subfamily. In terms of assembly, homodimer.

It localises to the cytoplasm. It catalyses the reaction tRNA(Tyr) + L-tyrosine + ATP = L-tyrosyl-tRNA(Tyr) + AMP + diphosphate + H(+). In terms of biological role, catalyzes the attachment of tyrosine to tRNA(Tyr) in a two-step reaction: tyrosine is first activated by ATP to form Tyr-AMP and then transferred to the acceptor end of tRNA(Tyr). This is Tyrosine--tRNA ligase from Ehrlichia ruminantium (strain Welgevonden).